A 739-amino-acid chain; its full sequence is MTLEMLPEQIQESKIYREWGLTDEEYLKIKDEILGGRLPNFTETGMYAVMWSEHCCYKNSKPVLKKFPTTGPQVLMGPGEGAGVVDIGDDLAVVFKAESHNHPSYVEPYEGAATGSGGIIRDIFSMGARPIAILDSLRFGPIDNGKTRHIVDQVTAGIAGYGNCIGIPTVGGEVAFDESYAGNPLVNVMCVGLIEHKHIQKGQAKGVGNSIFYVGAKTGRDGIHGASFASKEFGSGSETQRSAVQVGDPFMEKLLLEACIEVIQNHGDILVGIQDMGAAGLVSSTSEMASKAGSGLRLNLDNVPQRETEMIPYEMMLSESQERMVLCVKKGHEQEIIDLFKKYDLDAVNIGEVTDDGFYTLYHKGQMVAHVPVDSLAEDAPTYYREAKVPERIQKFTDSEKYLPEITDSAVSEIFKKLLAQPTIASKKSIYETYDSRVMTNTVVAPGSDAAVLRVRGTNKALAMTTDCNARYLYLDPEKGGAIAVAEAARNIVASGGKPLAITDCLNFGNPEKPEQFWELTTAADGISRSCLALDTPVISGNVSLYNETNGSAILPTPMIGMVGLIEDVKNITTQEFKKAGDLIVLVGQTFDDFSGSELQKMLTGEISGKIDFDLETEKVNQDFVLKAITDGLINSAHDLSEGGLAIALAESAFANGLGIDVEVDLSNAQLFSETQGRFVLSISPENQAAFEKLLTESSASSEVIGKVTDNGILKINELSISTDEAVSIYEGALPCLMK.

H54 is a catalytic residue. The ATP site is built by Y57 and K96. E98 is a Mg(2+) binding site. Residues 99 to 102 and R121 contribute to the substrate site; that span reads SHNH. The active-site Proton acceptor is H100. D122 provides a ligand contact to Mg(2+). Q245 contributes to the substrate binding site. Mg(2+) is bound at residue D275. Position 319-321 (319-321) interacts with substrate; that stretch reads ESQ. Residues D504 and G541 each contribute to the ATP site. N542 contacts Mg(2+). S544 contacts substrate.

Belongs to the FGAMS family. Monomer. Part of the FGAM synthase complex composed of 1 PurL, 1 PurQ and 2 PurS subunits.

The protein resides in the cytoplasm. It catalyses the reaction N(2)-formyl-N(1)-(5-phospho-beta-D-ribosyl)glycinamide + L-glutamine + ATP + H2O = 2-formamido-N(1)-(5-O-phospho-beta-D-ribosyl)acetamidine + L-glutamate + ADP + phosphate + H(+). It functions in the pathway purine metabolism; IMP biosynthesis via de novo pathway; 5-amino-1-(5-phospho-D-ribosyl)imidazole from N(2)-formyl-N(1)-(5-phospho-D-ribosyl)glycinamide: step 1/2. Functionally, part of the phosphoribosylformylglycinamidine synthase complex involved in the purines biosynthetic pathway. Catalyzes the ATP-dependent conversion of formylglycinamide ribonucleotide (FGAR) and glutamine to yield formylglycinamidine ribonucleotide (FGAM) and glutamate. The FGAM synthase complex is composed of three subunits. PurQ produces an ammonia molecule by converting glutamine to glutamate. PurL transfers the ammonia molecule to FGAR to form FGAM in an ATP-dependent manner. PurS interacts with PurQ and PurL and is thought to assist in the transfer of the ammonia molecule from PurQ to PurL. The chain is Phosphoribosylformylglycinamidine synthase subunit PurL from Lactococcus lactis subsp. cremoris (strain SK11).